Reading from the N-terminus, the 295-residue chain is Pyridoxal 5'-phosphate synthase subunit PdxS (295 aa).

Residue aspartate 23 coordinates D-ribose 5-phosphate. Residue lysine 80 is the Schiff-base intermediate with D-ribose 5-phosphate of the active site. Glycine 152 contributes to the D-ribose 5-phosphate binding site. Arginine 164 contacts D-glyceraldehyde 3-phosphate. Residues glycine 213 and glycine 234–serine 235 each bind D-ribose 5-phosphate.

Belongs to the PdxS/SNZ family. In the presence of PdxT, forms a dodecamer of heterodimers.

It catalyses the reaction aldehydo-D-ribose 5-phosphate + D-glyceraldehyde 3-phosphate + L-glutamine = pyridoxal 5'-phosphate + L-glutamate + phosphate + 3 H2O + H(+). It participates in cofactor biosynthesis; pyridoxal 5'-phosphate biosynthesis. Catalyzes the formation of pyridoxal 5'-phosphate from ribose 5-phosphate (RBP), glyceraldehyde 3-phosphate (G3P) and ammonia. The ammonia is provided by the PdxT subunit. Can also use ribulose 5-phosphate and dihydroxyacetone phosphate as substrates, resulting from enzyme-catalyzed isomerization of RBP and G3P, respectively. The polypeptide is Pyridoxal 5'-phosphate synthase subunit PdxS (Methanopyrus kandleri (strain AV19 / DSM 6324 / JCM 9639 / NBRC 100938)).